Here is an 80-residue protein sequence, read N- to C-terminus: Exodeoxyribonuclease 7 small subunit (80 aa).

The protein belongs to the XseB family. As to quaternary structure, heterooligomer composed of large and small subunits.

It localises to the cytoplasm. It carries out the reaction Exonucleolytic cleavage in either 5'- to 3'- or 3'- to 5'-direction to yield nucleoside 5'-phosphates.. In terms of biological role, bidirectionally degrades single-stranded DNA into large acid-insoluble oligonucleotides, which are then degraded further into small acid-soluble oligonucleotides. This chain is Exodeoxyribonuclease 7 small subunit, found in Rickettsia conorii (strain ATCC VR-613 / Malish 7).